The sequence spans 482 residues: E1B 55 kDa protein (482 aa).

The tract at residues 73-94 (VLDSGEGPSCADDRDKQEKKES) is disordered. Residues 83–94 (ADDRDKQEKKES) show a composition bias toward basic and acidic residues. Ser476 and Ser477 each carry phosphoserine.

This sequence belongs to the adenoviridae E1B 55 kDa protein family. Interacts with host PML-4 and PML-5; this interaction promotes efficient subnuclear targeting of E1B-55K to PML nuclear bodies. Interacts with E4-ORF3 protein. Interacts with E4-ORF6 protein.

It is found in the host nucleus. Its subcellular location is the host cytoplasm. Plays a major role to prevent cellular inhibition of viral genome replication. Assembles an SCF-like E3 ubiquitin ligase complex based on the cellular proteins ELOB, ELOC, CUL5 and RBX1, in cooperation with viral E4orf6. This viral RING-type ligase ubiquitinates cellular substrates and targets them to proteasomal degradation: TP53/p53, LIG4, MRE11-RAD50-NBS1 (MRN) complex, ITGA3, DAXX and BLM. E1B-55K probably acts as the substrate-specific adapter of the SCF-like E3 ubiquitin ligase complex. Degradation of host TP53/p53 activity is essential for preventing E1A-induced TP53 accumulation that would otherwise lead to cell apoptosis and growth arrest. E1B-55K also inactivates TP53 transcription-factor activity by binding its transactivation domain. E1B-55K also functions as a SUMO1 E3 ligase for TP53 which causes the latter to be sequestered in promyelocytic leukemia (PML) nuclear bodies thereby contributing to maximal inhibition of TP53 function. The sequence is that of E1B 55 kDa protein from Homo sapiens (Human).